A 396-amino-acid chain; its full sequence is Acetate kinase (396 aa).

Residue asparagine 8 participates in Mg(2+) binding. Lysine 15 is an ATP binding site. Arginine 89 provides a ligand contact to substrate. Aspartate 146 functions as the Proton donor/acceptor in the catalytic mechanism. Residues 206–210 (HLGNG), 280–282 (DMR), and 328–332 (GVGEN) each bind ATP. Residue glutamate 382 participates in Mg(2+) binding.

The protein belongs to the acetokinase family. Homodimer. Mg(2+) serves as cofactor. Requires Mn(2+) as cofactor.

It localises to the cytoplasm. The catalysed reaction is acetate + ATP = acetyl phosphate + ADP. The protein operates within metabolic intermediate biosynthesis; acetyl-CoA biosynthesis; acetyl-CoA from acetate: step 1/2. In terms of biological role, catalyzes the formation of acetyl phosphate from acetate and ATP. Can also catalyze the reverse reaction. In Clavibacter sepedonicus (Clavibacter michiganensis subsp. sepedonicus), this protein is Acetate kinase.